A 357-amino-acid polypeptide reads, in one-letter code: Sorbitol dehydrogenase 1 (357 aa).

Residue cysteine 43 coordinates Zn(2+). Tyrosine 49 is a substrate binding site. The Zn(2+) site is built by histidine 68 and glutamate 69. Glutamate 154 provides a ligand contact to substrate. Residues aspartate 202, lysine 207, 275-277 (VGM), and 299-301 (CFR) each bind NAD(+). Substrate-binding residues include arginine 301 and tyrosine 302.

The protein belongs to the zinc-containing alcohol dehydrogenase family. As to quaternary structure, homotetramer. Zn(2+) is required as a cofactor.

It catalyses the reaction keto-D-fructose + NADH + H(+) = D-sorbitol + NAD(+). The enzyme catalyses xylitol + NAD(+) = D-xylulose + NADH + H(+). Its function is as follows. Polyol dehydrogenase that catalyzes the reversible NAD(+)-dependent oxidation of various sugar alcohols. Is active with D-sorbitol (D-glucitol) and xylitol as substrates, leading to the C2-oxidized product D-fructose and D-xylulose, respectively. Is likely involved in the utilization of D-sorbitol as a sole carbon source for growth. Has no activity on mannitol and primary alcohols such as ethanol. The chain is Sorbitol dehydrogenase 1 (SOR1) from Saccharomyces cerevisiae (strain ATCC 204508 / S288c) (Baker's yeast).